The sequence spans 602 residues: Probable pectinesterase/pectinesterase inhibitor 64 (602 aa).

The chain crosses the membrane as a helical span at residues Ile-36 to Ala-56. Residues Ser-62–Ala-91 are disordered. Over residues Pro-81–Ile-90 the composition is skewed to pro residues. The segment at Pro-87–Met-237 is pectinesterase inhibitor 64. Residues Asn-98, Asn-156, Asn-212, Asn-229, and Asn-315 are each glycosylated (N-linked (GlcNAc...) asparagine). A pectinesterase 64 region spans residues Asp-288–Asp-595. 2 residues coordinate substrate: Thr-367 and Gln-397. Residue Asp-420 is the Proton donor; for pectinesterase activity of the active site. Cys-434 and Cys-454 are oxidised to a cystine. Asp-441 functions as the Nucleophile; for pectinesterase activity in the catalytic mechanism. Asn-492 and Asn-496 each carry an N-linked (GlcNAc...) asparagine glycan. Positions 518 and 520 each coordinate substrate.

In the N-terminal section; belongs to the PMEI family. It in the C-terminal section; belongs to the pectinesterase family. Expressed in siliques.

The protein localises to the membrane. The catalysed reaction is [(1-&gt;4)-alpha-D-galacturonosyl methyl ester](n) + n H2O = [(1-&gt;4)-alpha-D-galacturonosyl](n) + n methanol + n H(+). Its pathway is glycan metabolism; pectin degradation; 2-dehydro-3-deoxy-D-gluconate from pectin: step 1/5. Functionally, acts in the modification of cell walls via demethylesterification of cell wall pectin. In Arabidopsis thaliana (Mouse-ear cress), this protein is Probable pectinesterase/pectinesterase inhibitor 64 (PME64).